The primary structure comprises 293 residues: Ribosomal protein L11 methyltransferase (293 aa).

4 residues coordinate S-adenosyl-L-methionine: Thr145, Gly166, Asp188, and Asn230.

The protein belongs to the methyltransferase superfamily. PrmA family.

It is found in the cytoplasm. It carries out the reaction L-lysyl-[protein] + 3 S-adenosyl-L-methionine = N(6),N(6),N(6)-trimethyl-L-lysyl-[protein] + 3 S-adenosyl-L-homocysteine + 3 H(+). In terms of biological role, methylates ribosomal protein L11. This chain is Ribosomal protein L11 methyltransferase, found in Salmonella arizonae (strain ATCC BAA-731 / CDC346-86 / RSK2980).